The chain runs to 364 residues: Dihydroorotase (364 aa).

The Zn(2+) site is built by histidine 14, histidine 16, lysine 98, histidine 137, histidine 180, and aspartate 258. Lysine 98 carries the N6-carboxylysine modification.

It belongs to the metallo-dependent hydrolases superfamily. DHOase family. Class II DHOase subfamily. Requires Zn(2+) as cofactor.

The catalysed reaction is (S)-dihydroorotate + H2O = N-carbamoyl-L-aspartate + H(+). It participates in pyrimidine metabolism; UMP biosynthesis via de novo pathway; (S)-dihydroorotate from bicarbonate: step 3/3. Catalyzes the conversion of ureidosuccinic acid (USA) to dihydroorotate, the third step of the de novo pyrimidine biosynthetic pathway. This Saccharomyces cerevisiae (strain ATCC 204508 / S288c) (Baker's yeast) protein is Dihydroorotase (URA4).